We begin with the raw amino-acid sequence, 926 residues long: Alanine--tRNA ligase (926 aa).

Zn(2+) contacts are provided by His611, His615, Cys714, and His718.

The protein belongs to the class-II aminoacyl-tRNA synthetase family. Zn(2+) serves as cofactor.

The protein resides in the cytoplasm. It catalyses the reaction tRNA(Ala) + L-alanine + ATP = L-alanyl-tRNA(Ala) + AMP + diphosphate. In terms of biological role, catalyzes the attachment of alanine to tRNA(Ala) in a two-step reaction: alanine is first activated by ATP to form Ala-AMP and then transferred to the acceptor end of tRNA(Ala). Also edits incorrectly charged Ser-tRNA(Ala) and Gly-tRNA(Ala) via its editing domain. This Methanosarcina mazei (strain ATCC BAA-159 / DSM 3647 / Goe1 / Go1 / JCM 11833 / OCM 88) (Methanosarcina frisia) protein is Alanine--tRNA ligase.